The sequence spans 308 residues: Protein translocase subunit SecF (308 aa).

The next 6 membrane-spanning stretches (helical) occupy residues Val-23 to Tyr-42, Ile-140 to Val-160, Trp-164 to Phe-184, Leu-194 to Ile-214, Ile-246 to Ala-266, and Val-272 to Ile-292.

This sequence belongs to the SecD/SecF family. SecF subfamily. As to quaternary structure, forms a complex with SecD. Part of the essential Sec protein translocation apparatus which comprises SecA, SecYEG and auxiliary proteins SecDF-YajC and YidC.

The protein resides in the cell inner membrane. Part of the Sec protein translocase complex. Interacts with the SecYEG preprotein conducting channel. SecDF uses the proton motive force (PMF) to complete protein translocation after the ATP-dependent function of SecA. This chain is Protein translocase subunit SecF, found in Rickettsia typhi (strain ATCC VR-144 / Wilmington).